A 624-amino-acid polypeptide reads, in one-letter code: Penicillin-binding protein 4 (624 aa).

Positions 1-21 are cleaved as a signal peptide; that stretch reads MTMLRKIIGWILLLCIIPLFA. E96 acts as the Proton donor; for transglycosylase activity in catalysis. Catalysis depends on S388, which acts as the Acyl-ester intermediate; for transpeptidase activity.

In the N-terminal section; belongs to the glycosyltransferase 51 family. This sequence in the C-terminal section; belongs to the transpeptidase family. The N-terminus is blocked.

Its subcellular location is the cell membrane. The catalysed reaction is [GlcNAc-(1-&gt;4)-Mur2Ac(oyl-L-Ala-gamma-D-Glu-L-Lys-D-Ala-D-Ala)](n)-di-trans,octa-cis-undecaprenyl diphosphate + beta-D-GlcNAc-(1-&gt;4)-Mur2Ac(oyl-L-Ala-gamma-D-Glu-L-Lys-D-Ala-D-Ala)-di-trans,octa-cis-undecaprenyl diphosphate = [GlcNAc-(1-&gt;4)-Mur2Ac(oyl-L-Ala-gamma-D-Glu-L-Lys-D-Ala-D-Ala)](n+1)-di-trans,octa-cis-undecaprenyl diphosphate + di-trans,octa-cis-undecaprenyl diphosphate + H(+). It carries out the reaction Preferential cleavage: (Ac)2-L-Lys-D-Ala-|-D-Ala. Also transpeptidation of peptidyl-alanyl moieties that are N-acyl substituents of D-alanine.. Functionally, cell wall formation. Synthesis of cross-linked peptidoglycan from the lipid intermediates. The enzyme has a penicillin-insensitive transglycosylase N-terminal domain (formation of linear glycan strands) and a penicillin-sensitive transpeptidase C-terminal domain (cross-linking of the peptide subunits). Has a partially redundant function with PBP-2A (pbpA) during spore outgrowth. The sequence is that of Penicillin-binding protein 4 from Bacillus subtilis (strain 168).